Reading from the N-terminus, the 103-residue chain is uncharacterized protein (103 aa).

2 stretches are compositionally biased toward polar residues: residues 1–10 (MSNSCSTSSY) and 18–28 (TRSGSNVNRNY). Residues 1–28 (MSNSCSTSSYPIRRKTPTRSGSNVNRNY) are disordered.

This is an uncharacterized protein from Acanthamoeba polyphaga mimivirus (APMV).